The primary structure comprises 527 residues: Glucose transporter 1B/1C/1D/1F/2B (527 aa).

Residues 1–22 (MTERRDNVSHAPDAIEGPNDGA) form a disordered region. Over 1–43 (MTERRDNVSHAPDAIEGPNDGAHAEDTSPGFFSLENLGVAQVQ) the chain is Cytoplasmic. The helical transmembrane segment at 44 to 64 (VVGGTLNGYVIGYVAVYLLLY) threads the bilayer. At 65–118 (LTATECKFTTEGACGGRKIYGCKWSGTTCKFENPKCSEGSDPSDSCKNEVAYTS) the chain is on the extracellular side. The chain crosses the membrane as a helical span at residues 119–139 (VYSGIFACAMIVGSMVGSIIA). Residues 140-151 (GKCITTFGLKKS) lie on the Cytoplasmic side of the membrane. The helical transmembrane segment at 152 to 172 (FIIVSITCTIACVVVQVAIEY) threads the bilayer. The Extracellular portion of the chain corresponds to 173–175 (NNY). A helical membrane pass occupies residues 176 to 196 (YALCTGRVLIGLGVGILCSVF). At 197 to 213 (PMYVNENAHPKLCKMDG) the chain is on the cytoplasmic side. The helical transmembrane segment at 214–234 (VLFQVFTTLGIMLAAMLGLIL) threads the bilayer. At 235–249 (DKTGASKEEANMAGR) the chain is on the extracellular side. A helical transmembrane segment spans residues 250–270 (LHVFSAVPLGLSVAMFLVGMF). Residues 271–299 (LRESTATFAQDDDGKADGGMDPNEYGWGQ) lie on the Cytoplasmic side of the membrane. A helical transmembrane segment spans residues 300 to 320 (MLWPLFMGAVTAGTLQLTGIN). The Extracellular segment spans residues 321–338 (AVMNYAPKITENLGMDPS). A helical membrane pass occupies residues 339 to 359 (LGNFLVMAWNFVTSLVAIPLA). Residues 360-372 (SRFTMRQMFITCS) are Cytoplasmic-facing. The helical transmembrane segment at 373-393 (FVASCMCLFLCGIPVFPGVAG) threads the bilayer. Over 394-403 (KEVKNGVATT) the chain is Extracellular. The chain crosses the membrane as a helical span at residues 404 to 424 (GIALFIAAFEFGVGSCFFVLA). Topologically, residues 425 to 436 (QDLFPPSFRPKG) are cytoplasmic. A helical membrane pass occupies residues 437-457 (GSFVVMMQFIFNILINLLYPI). Over 458–475 (TTEAISGGATGNQDKGQA) the chain is Extracellular. A helical transmembrane segment spans residues 476–496 (VAFILFGLIGLICSVLQFFYL). Residues 497-527 (YPYDANQDHENDHGGEPVEQKTYPVEASPRN) lie on the Cytoplasmic side of the membrane. Positions 506–515 (ENDHGGEPVE) are enriched in basic and acidic residues. Residues 506–527 (ENDHGGEPVEQKTYPVEASPRN) form a disordered region.

Belongs to the major facilitator superfamily. Sugar transporter (TC 2.A.1.1) family.

It localises to the membrane. Its function is as follows. Facilitative glucose transporter. This is Glucose transporter 1B/1C/1D/1F/2B (THT1B) from Trypanosoma brucei brucei.